The sequence spans 169 residues: Protein HIGH ARSENIC CONTENT 1, mitochondrial (169 aa).

The N-terminal 59 residues, 1 to 59 (MYTYSLLNLSHCRRQTRKKRKTDHTEGFLMEETKPKTVEDVETVDVYTAKGFLSTGHRY), are a transit peptide targeting the mitochondrion. Residues 60–153 (LDVRTNEEFA…WVDAGFAGDK (94 aa)) enclose the Rhodanese domain. Cys-113 serves as the catalytic Cysteine persulfide intermediate.

Expressed in root hairs, epidermal cells at the surface of the root and in the pericycle within the stele.

It is found in the mitochondrion. The catalysed reaction is [glutaredoxin]-dithiol + arsenate + glutathione + H(+) = glutathionyl-S-S-[glutaredoxin] + arsenite + H2O. Its activity is regulated as follows. Inhibited by trobenzenesulphonic acid (TNBS). Functionally, arsenate reductase critical for arsenic tolerance. Reduces arsenate to arsenite in the root, facilitating efflux of arsenic back into the soil to limit both its accumulation in the root and transport to the shoot. Essential for arsenite efflux from the root, but not necessary for arsenate uptake. This Arabidopsis thaliana (Mouse-ear cress) protein is Protein HIGH ARSENIC CONTENT 1, mitochondrial.